Consider the following 432-residue polypeptide: UPF0761 membrane protein Cag_0935 (432 aa).

Helical transmembrane passes span 52 to 72, 108 to 128, 148 to 168, 190 to 210, 220 to 240, and 254 to 274; these read LLSI…FEVF, NIPL…LSTV, FTLY…SLAA, LLAL…YMLV, AFAG…WFLF, and ALSV…VVLV.

It belongs to the UPF0761 family.

It is found in the cell inner membrane. The sequence is that of UPF0761 membrane protein Cag_0935 from Chlorobium chlorochromatii (strain CaD3).